Reading from the N-terminus, the 214-residue chain is Adenylate kinase (214 aa).

10–15 (GAGKGT) contributes to the ATP binding site. The NMP stretch occupies residues 30–59 (STGDIFRANIKNGTELGKKAKTYMDQGALV). AMP-binding positions include Thr31, Arg36, 57-59 (ALV), 85-88 (GFPR), and Gln92. The LID stretch occupies residues 126–163 (GRRACLNCGATYHIVFNPTKVEGKCDACGADTVLRDDD). Position 127 (Arg127) interacts with ATP. Zn(2+) is bound by residues Cys130 and Cys133. An ATP-binding site is contributed by 136–137 (TY). Zn(2+) contacts are provided by Cys150 and Cys153. AMP contacts are provided by Arg160 and Arg171. ATP is bound at residue Lys199.

It belongs to the adenylate kinase family. In terms of assembly, monomer.

The protein resides in the cytoplasm. It catalyses the reaction AMP + ATP = 2 ADP. It functions in the pathway purine metabolism; AMP biosynthesis via salvage pathway; AMP from ADP: step 1/1. Catalyzes the reversible transfer of the terminal phosphate group between ATP and AMP. Plays an important role in cellular energy homeostasis and in adenine nucleotide metabolism. In Agathobacter rectalis (strain ATCC 33656 / DSM 3377 / JCM 17463 / KCTC 5835 / VPI 0990) (Eubacterium rectale), this protein is Adenylate kinase.